The following is a 353-amino-acid chain: Phosphate acyltransferase (353 aa).

It belongs to the PlsX family. Homodimer. Probably interacts with PlsY.

The protein localises to the cytoplasm. The enzyme catalyses a fatty acyl-[ACP] + phosphate = an acyl phosphate + holo-[ACP]. It functions in the pathway lipid metabolism; phospholipid metabolism. Catalyzes the reversible formation of acyl-phosphate (acyl-PO(4)) from acyl-[acyl-carrier-protein] (acyl-ACP). This enzyme utilizes acyl-ACP as fatty acyl donor, but not acyl-CoA. The sequence is that of Phosphate acyltransferase from Rhodopseudomonas palustris (strain BisB18).